A 1224-amino-acid chain; its full sequence is Cytosolic carboxypeptidase 1 (1224 aa).

Residues 361–398 (PPDVDDVVDESDDNDDAETESEIETEDDKDQNFKNDDI) form a disordered region. Positions 363–389 (DVDDVVDESDDNDDAETESEIETEDDK) are enriched in acidic residues. The Peptidase M14 domain occupies 846-1136 (YPYTYSTLKM…KFCVGLLRLK (291 aa)). Positions 918, 921, and 1015 each coordinate Zn(2+). The active-site Proton donor/acceptor is the glutamate 1100. Positions 1186–1197 (SAESNDDQDAEL) are enriched in acidic residues. The tract at residues 1186 to 1224 (SAESNDDQDAELADNVGDYEANNQEDGLSDSDSTRILLS) is disordered. Positions 1206 to 1224 (ANNQEDGLSDSDSTRILLS) are enriched in polar residues.

The protein belongs to the peptidase M14 family. The cofactor is Zn(2+).

It localises to the cytoplasm. The protein localises to the cytosol. The protein resides in the nucleus. Its subcellular location is the mitochondrion. The catalysed reaction is (L-glutamyl)(n+1)-gamma-L-glutamyl-L-glutamyl-[protein] + H2O = (L-glutamyl)(n)-gamma-L-glutamyl-L-glutamyl-[protein] + L-glutamate. It carries out the reaction C-terminal L-alpha-aminoacyl-L-glutamyl-L-glutamyl-[tubulin] + H2O = C-terminal L-alpha-aminoacyl-L-glutamyl-[tubulin] + L-glutamate. Metallocarboxypeptidase that mediates protein deglutamylation of tubulin and non-tubulin target proteins. Catalyzes the removal of polyglutamate side chains present on the gamma-carboxyl group of glutamate residues within the C-terminal tail of alpha- and beta-tubulin. Specifically cleaves tubulin long-side-chains, while it is not able to remove the branching point glutamate. Also catalyzes the removal of polyglutamate residues from the carboxy-terminus of alpha-tubulin as well as non-tubulin proteins. The sequence is that of Cytosolic carboxypeptidase 1 (AGTPBP1) from Gallus gallus (Chicken).